The chain runs to 558 residues: MAELRSNMITQGIDRAPHRSLLRAAGVKEEDFGKPFIAVCNSYIDIVPGHVHLQEFGKIVKEAIREAGGVPFEFNTIGVDDGIAMGHIGMRYSLPSREIIADSVETVVSAHWFDGMVCIPNCDKITPGMLMAAMRINIPTIFVSGGPMAAGRTSDGRKISLSSVFEGVGAYQAGKIGESDLQELEQFGCPTCGSCSGMFTANSMNCLSEALGLALPGNGTILATSPERREFVRKSAAQLMETIKKDIKPRDIVTEKAIDNAFALDMALGGSTNTVLHTLALANEAGVEYSLERINEVAERVPHLSKLAPASDVFIEDLHEAGGVSAALNELAKKEGALHLDALTVTGRTLGETIAGHEVKDYDVIHPLDNPFTEKGGLAVLFGNLAPDGAIIKTGGVQDGITRHEGPAVVFDSQDAALEGIINRKVKEGDVVIIRYEGPKGGPGMPEMLAPTSQIVGMGLGPKVALITDGRFSGASRGLSIGHVSPEAAEGGPLAFVENGDHVIVDIEKRILDVQVPEEEWEKRKAEWKGFEPKVKTGYLARYSKLVTSANTGGIMKI.

Asp-81 provides a ligand contact to Mg(2+). [2Fe-2S] cluster is bound at residue Cys-122. Positions 123 and 124 each coordinate Mg(2+). At Lys-124 the chain carries N6-carboxylysine. Cys-195 provides a ligand contact to [2Fe-2S] cluster. Glu-447 lines the Mg(2+) pocket. The active-site Proton acceptor is the Ser-473.

It belongs to the IlvD/Edd family. As to quaternary structure, homodimer. It depends on [2Fe-2S] cluster as a cofactor. Requires Mg(2+) as cofactor.

It carries out the reaction (2R)-2,3-dihydroxy-3-methylbutanoate = 3-methyl-2-oxobutanoate + H2O. It catalyses the reaction (2R,3R)-2,3-dihydroxy-3-methylpentanoate = (S)-3-methyl-2-oxopentanoate + H2O. Its pathway is amino-acid biosynthesis; L-isoleucine biosynthesis; L-isoleucine from 2-oxobutanoate: step 3/4. The protein operates within amino-acid biosynthesis; L-valine biosynthesis; L-valine from pyruvate: step 3/4. Functionally, functions in the biosynthesis of branched-chain amino acids. Catalyzes the dehydration of (2R,3R)-2,3-dihydroxy-3-methylpentanoate (2,3-dihydroxy-3-methylvalerate) into 2-oxo-3-methylpentanoate (2-oxo-3-methylvalerate) and of (2R)-2,3-dihydroxy-3-methylbutanoate (2,3-dihydroxyisovalerate) into 2-oxo-3-methylbutanoate (2-oxoisovalerate), the penultimate precursor to L-isoleucine and L-valine, respectively. The chain is Dihydroxy-acid dehydratase from Bacillus velezensis (strain DSM 23117 / BGSC 10A6 / LMG 26770 / FZB42) (Bacillus amyloliquefaciens subsp. plantarum).